A 180-amino-acid chain; its full sequence is MKLLLRALATFVLLNGVDSVADESFQKCNVTGGPHGKEFDDSNATSRGLILRALRLCGVDFVDGIGVTIWDLSVEENAPFHGLDQNCRDVQLSPYEYITSVEFHSAKIDSETRVGFIRLLSQENKTYEIGKMSNRGKEGISECTAPEGYQLAGFYGRSEDKIFALGALWGPLPEKWPLQG.

A signal peptide spans methionine 1–serine 19. Residues phenylalanine 25 to proline 171 form the Jacalin-type lectin domain. The RxLR-dEER signature appears at arginine 52 to asparagine 77.

Belongs to the RxLR effector family.

The protein resides in the secreted. The protein localises to the host cytoplasm. Its subcellular location is the host nucleus. In terms of biological role, effector that partially suppresses the tobacco programmed cell death induced by cell death-inducing proteins. In Plasmopara viticola (Downy mildew of grapevine), this protein is Secreted RxLR effector protein 19.